Reading from the N-terminus, the 402-residue chain is Transcription regulatory protein OpdE (402 aa).

A run of 12 helical transmembrane segments spans residues Val-22–Leu-42, Gly-60–Gly-80, Thr-86–Pro-106, Tyr-108–Met-128, Ala-147–Leu-167, Leu-170–Trp-190, Pro-220–Phe-240, Ala-256–Ile-276, Ala-296–Leu-316, Leu-318–Phe-338, Leu-348–Phe-368, and Ala-375–Ala-395.

It to B.subtilis YwfA.

Its subcellular location is the cell membrane. Regulates the expression of oprD which encodes the imipenem-specific porin. The chain is Transcription regulatory protein OpdE (opdE) from Pseudomonas aeruginosa (strain ATCC 15692 / DSM 22644 / CIP 104116 / JCM 14847 / LMG 12228 / 1C / PRS 101 / PAO1).